Consider the following 238-residue polypeptide: 2,3-bisphosphoglycerate-dependent phosphoglycerate mutase (238 aa).

Substrate contacts are provided by residues 8-15 (RHGQSEWN), 21-22 (TG), arginine 60, 86-89 (ERHY), lysine 97, 113-114 (RR), and 182-183 (GN). The active-site Tele-phosphohistidine intermediate is the histidine 9. Glutamate 86 serves as the catalytic Proton donor/acceptor.

Belongs to the phosphoglycerate mutase family. BPG-dependent PGAM subfamily. In terms of assembly, homodimer.

The enzyme catalyses (2R)-2-phosphoglycerate = (2R)-3-phosphoglycerate. It functions in the pathway carbohydrate degradation; glycolysis; pyruvate from D-glyceraldehyde 3-phosphate: step 3/5. Functionally, catalyzes the interconversion of 2-phosphoglycerate and 3-phosphoglycerate. This Pelagibacter ubique (strain HTCC1062) protein is 2,3-bisphosphoglycerate-dependent phosphoglycerate mutase.